Consider the following 195-residue polypeptide: Putative kinase protein 143R (195 aa).

Residue 8–16 (GIIGAGKST) participates in ATP binding. Positions 31, 43, and 54 each coordinate substrate. The Proton acceptor role is filled by Glu-78. Substrate contacts are provided by Arg-79 and Glu-142.

The protein belongs to the DCK/DGK family.

The sequence is that of Putative kinase protein 143R from Acheta domesticus (House cricket).